The following is a 371-amino-acid chain: Alanine racemase (371 aa).

Residue lysine 39 is the Proton acceptor; specific for D-alanine of the active site. N6-(pyridoxal phosphate)lysine is present on lysine 39. Position 137 (arginine 137) interacts with substrate. Tyrosine 266 functions as the Proton acceptor; specific for L-alanine in the catalytic mechanism. Methionine 314 contributes to the substrate binding site.

This sequence belongs to the alanine racemase family. Pyridoxal 5'-phosphate serves as cofactor.

It carries out the reaction L-alanine = D-alanine. It participates in amino-acid biosynthesis; D-alanine biosynthesis; D-alanine from L-alanine: step 1/1. Functionally, catalyzes the interconversion of L-alanine and D-alanine. May also act on other amino acids. The protein is Alanine racemase (alr) of Desulfovibrio desulfuricans (strain ATCC 27774 / DSM 6949 / MB).